Reading from the N-terminus, the 465-residue chain is ATP synthase subunit beta (465 aa).

153 to 160 (GGAGVGKT) contributes to the ATP binding site.

It belongs to the ATPase alpha/beta chains family. In terms of assembly, F-type ATPases have 2 components, CF(1) - the catalytic core - and CF(0) - the membrane proton channel. CF(1) has five subunits: alpha(3), beta(3), gamma(1), delta(1), epsilon(1). CF(0) has three main subunits: a(1), b(2) and c(9-12). The alpha and beta chains form an alternating ring which encloses part of the gamma chain. CF(1) is attached to CF(0) by a central stalk formed by the gamma and epsilon chains, while a peripheral stalk is formed by the delta and b chains.

It is found in the cell membrane. It carries out the reaction ATP + H2O + 4 H(+)(in) = ADP + phosphate + 5 H(+)(out). Functionally, produces ATP from ADP in the presence of a proton gradient across the membrane. The catalytic sites are hosted primarily by the beta subunits. This chain is ATP synthase subunit beta, found in Clostridium perfringens (strain ATCC 13124 / DSM 756 / JCM 1290 / NCIMB 6125 / NCTC 8237 / Type A).